A 230-amino-acid chain; its full sequence is Cysteine S-methyltransferase OspZ (230 aa).

The interaction with host proteins TAB2, TAB3 and ZRANB3 stretch occupies residues 49–52 (GITR). Residues Ala92, Ser98, Arg107, Gln111, Tyr204, and Glu208 each coordinate S-adenosyl-L-methionine.

This sequence belongs to the NleE/OspZ family. Monomer.

The protein resides in the secreted. It localises to the host cytoplasm. The protein localises to the host nucleus. The enzyme catalyses L-cysteinyl-[protein] + S-adenosyl-L-methionine = S-methyl-L-cysteinyl-[protein] + S-adenosyl-L-homocysteine + H(+). In terms of biological role, cysteine methyltransferase effector that inhibits host cell NF-kappa-B activation by preventing nuclear translocation of host protein RELA/p65. Acts by mediating cysteine methylation of host proteins TAB2 and TAB3: methylation of a conserved cysteine residue of the RanBP2-type zinc finger (NZF) of TAB2 and TAB3 disrupts zinc-binding, thereby inactivating the ubiquitin chain-binding activity of TAB2 and TAB3, leading to NF-kappa-B inactivation. Also mediates cysteine methylation of host protein ZRANB3, inactivating its ability to bind ubiquitin chains. The chain is Cysteine S-methyltransferase OspZ from Shigella flexneri.